The sequence spans 331 residues: Fructose-1,6-bisphosphatase class 1 (331 aa).

Glu-80, Asp-98, Leu-100, and Asp-101 together coordinate Mg(2+). Substrate-binding positions include 101 to 104 (DGSS) and Asn-189. Glu-261 is a binding site for Mg(2+).

This sequence belongs to the FBPase class 1 family. As to quaternary structure, homotetramer. Mg(2+) serves as cofactor.

It is found in the cytoplasm. The enzyme catalyses beta-D-fructose 1,6-bisphosphate + H2O = beta-D-fructose 6-phosphate + phosphate. Its pathway is carbohydrate biosynthesis; gluconeogenesis. The sequence is that of Fructose-1,6-bisphosphatase class 1 from Rhodobacter capsulatus (strain ATCC BAA-309 / NBRC 16581 / SB1003).